Reading from the N-terminus, the 162-residue chain is Allantoicase (162 aa).

The protein belongs to the allantoicase family. Homohexamer. In terms of tissue distribution, expressed in zygote.

It carries out the reaction allantoate + H2O = (S)-ureidoglycolate + urea. Its pathway is nitrogen metabolism; (S)-allantoin degradation; (S)-ureidoglycolate from allantoate (aminidohydrolase route): step 1/1. In terms of biological role, catalyzes the degradation of allantoate to (-)-ureidoglycolate and (+)-ureidoglycolate to glyoxylate. The protein is Allantoicase of Chlamydomonas reinhardtii (Chlamydomonas smithii).